We begin with the raw amino-acid sequence, 199 residues long: Large ribosomal subunit protein bL25 (199 aa).

The protein belongs to the bacterial ribosomal protein bL25 family. CTC subfamily. Part of the 50S ribosomal subunit; part of the 5S rRNA/L5/L18/L25 subcomplex. Contacts the 5S rRNA. Binds to the 5S rRNA independently of L5 and L18.

Its function is as follows. This is one of the proteins that binds to the 5S RNA in the ribosome where it forms part of the central protuberance. In Chloroherpeton thalassium (strain ATCC 35110 / GB-78), this protein is Large ribosomal subunit protein bL25.